Reading from the N-terminus, the 409-residue chain is DNA primase small subunit (409 aa).

Residues Glu-46, Asp-111, and Asp-113 contribute to the active site. The Zinc knuckle motif signature appears at 123–133 (CCSGAQVCSKC).

Belongs to the eukaryotic-type primase small subunit family. DNA polymerase alpha:primase is a four subunit enzyme complex, which is assembled throughout the cell cycle, and consists of the two DNA polymerase subunits A POL1 and B POL12, and the DNA primase large PRI2 and small PRI1 subunits.

Functionally, DNA primase is the polymerase that synthesizes small RNA primers for the Okazaki fragments made during discontinuous DNA replication. In a complex with DNA polymerase alpha (DNA polymerase alpha:primase) constitutes a replicative polymerase. Both primase components participate in formation of the active center, but the ATP-binding site is exclusively located on p48. This is DNA primase small subunit (PRI1) from Saccharomyces cerevisiae (strain ATCC 204508 / S288c) (Baker's yeast).